The sequence spans 132 residues: S-protein homolog 15 (132 aa).

The N-terminal stretch at 1-20 (MSRLIFFILVTAIYFVGNEA) is a signal peptide.

It belongs to the plant self-incompatibility (S1) protein family.

The protein resides in the secreted. This is S-protein homolog 15 from Arabidopsis thaliana (Mouse-ear cress).